Here is a 327-residue protein sequence, read N- to C-terminus: uncharacterized protein (327 aa).

Disordered stretches follow at residues 127–170 (LSEF…GIYR) and 298–327 (NFEDVNDGSLASPVQIGQSYRKRKKNLKRR). 3 positions are modified to phosphoserine: Ser-153, Ser-154, and Ser-309. A compositionally biased stretch (basic residues) spans 317–327 (YRKRKKNLKRR).

This is an uncharacterized protein from Schizosaccharomyces pombe (strain 972 / ATCC 24843) (Fission yeast).